A 243-amino-acid polypeptide reads, in one-letter code: Membrane selenoprotein (243 aa).

Residues 12–63 (GEDCEGGVUARPSSSSSSINNASDESTPLISKTNDEEKANIGISSTSNSPQE) form a disordered region. U20 is a non-standard amino acid (selenocysteine). Composition is skewed to polar residues over residues 30-43 (INNA…LISK) and 53-63 (GISSTSNSPQE). The next 4 membrane-spanning stretches (helical) occupy residues 74–94 (ILTL…PVLI), 102–122 (VSAG…LSIL), 144–164 (IKFG…FDIL), and 199–219 (VMGW…LLVG). Residue U88 is a non-standard amino acid, selenocysteine.

The protein resides in the membrane. The sequence is that of Membrane selenoprotein (msp) from Dictyostelium discoideum (Social amoeba).